The chain runs to 128 residues: Ribonuclease P protein component (128 aa).

Belongs to the RnpA family. In terms of assembly, consists of a catalytic RNA component (M1 or rnpB) and a protein subunit.

The enzyme catalyses Endonucleolytic cleavage of RNA, removing 5'-extranucleotides from tRNA precursor.. Its function is as follows. RNaseP catalyzes the removal of the 5'-leader sequence from pre-tRNA to produce the mature 5'-terminus. It can also cleave other RNA substrates such as 4.5S RNA. The protein component plays an auxiliary but essential role in vivo by binding to the 5'-leader sequence and broadening the substrate specificity of the ribozyme. This is Ribonuclease P protein component from Prochlorococcus marinus (strain MIT 9215).